We begin with the raw amino-acid sequence, 226 residues long: Ribonuclease 3 (226 aa).

Residues 6–128 (TKKIQKVLGY…LIGSIYLDSN (123 aa)) enclose the RNase III domain. Glutamate 41 contributes to the Mg(2+) binding site. Residue aspartate 45 is part of the active site. The Mg(2+) site is built by asparagine 114 and glutamate 117. Glutamate 117 is an active-site residue. A DRBM domain is found at 155-225 (DPKTRLQEYL…AQKALIKLGV (71 aa)).

This sequence belongs to the ribonuclease III family. As to quaternary structure, homodimer. Mg(2+) serves as cofactor.

It is found in the cytoplasm. It carries out the reaction Endonucleolytic cleavage to 5'-phosphomonoester.. Functionally, digests double-stranded RNA. Involved in the processing of primary rRNA transcript to yield the immediate precursors to the large and small rRNAs (23S and 16S). Processes some mRNAs, and tRNAs when they are encoded in the rRNA operon. Processes pre-crRNA and tracrRNA of type II CRISPR loci if present in the organism. This Buchnera aphidicola subsp. Acyrthosiphon pisum (strain 5A) protein is Ribonuclease 3.